The chain runs to 148 residues: 3-dehydroquinate dehydratase (148 aa).

Catalysis depends on Tyr-24, which acts as the Proton acceptor. Substrate contacts are provided by Asn-80, His-86, and Asp-93. His-106 (proton donor) is an active-site residue. Residues 107–108 and Arg-117 contribute to the substrate site; that span reads IS.

This sequence belongs to the type-II 3-dehydroquinase family. As to quaternary structure, homododecamer.

It carries out the reaction 3-dehydroquinate = 3-dehydroshikimate + H2O. The protein operates within metabolic intermediate biosynthesis; chorismate biosynthesis; chorismate from D-erythrose 4-phosphate and phosphoenolpyruvate: step 3/7. Its function is as follows. Catalyzes a trans-dehydration via an enolate intermediate. The protein is 3-dehydroquinate dehydratase of Acidovorax sp. (strain JS42).